A 427-amino-acid chain; its full sequence is GPI mannosyltransferase 2 (427 aa).

A run of 8 helical transmembrane segments spans residues 7–27 (LTTVFFTVKLVQYLLVYFAPG), 119–139 (ATLLNLVLHYVSVWLLYALTL), 164–184 (FLLAPYSEPLSFAFSFLGMLL), 197–217 (ITLAWYNWLPYTLSGICFSVA), 247–267 (AVLFPCIAGSMMLGIFAYMHY), 318–338 (VPNFLFALPNLVILWYSTVYF), 350–370 (LVYITRALLLIITFFAHVQII), and 404–424 (LYVNWLILWIPLQTVLFACFL).

Belongs to the PIGV family.

The protein localises to the endoplasmic reticulum membrane. It participates in glycolipid biosynthesis; glycosylphosphatidylinositol-anchor biosynthesis. Mannosyltransferase involved in glycosylphosphatidylinositol-anchor biosynthesis. Transfers the second mannose to the glycosylphosphatidylinositol during GPI precursor assembly. This Eremothecium gossypii (strain ATCC 10895 / CBS 109.51 / FGSC 9923 / NRRL Y-1056) (Yeast) protein is GPI mannosyltransferase 2 (GPI18).